Consider the following 61-residue polypeptide: Small ribosomal subunit protein uS14B (61 aa).

Zn(2+) is bound by residues C24, C27, C40, and C43.

The protein belongs to the universal ribosomal protein uS14 family. Zinc-binding uS14 subfamily. Part of the 30S ribosomal subunit. Contacts proteins S3 and S10. It depends on Zn(2+) as a cofactor.

In terms of biological role, binds 16S rRNA, required for the assembly of 30S particles and may also be responsible for determining the conformation of the 16S rRNA at the A site. The chain is Small ribosomal subunit protein uS14B from Cutibacterium acnes (strain DSM 16379 / KPA171202) (Propionibacterium acnes).